The sequence spans 93 residues: MSDFENKNPNNVLGGHKATLHNPNVSEEAKEHSKKVLENAGEAYDESSSGKTTTDDGDKNPGNVAGGYKATLNNPKVSDEAKEHAKKKLDGLE.

The disordered stretch occupies residues 1 to 93 (MSDFENKNPN…HAKKKLDGLE (93 aa)). 2 repeat units span residues 7–37 (KNPN…KKVL) and 59–89 (KNPG…KKKL). Residues 7-89 (KNPNNVLGGH…EAKEHAKKKL (83 aa)) are 2 X 30 AA approximate repeats. 2 stretches are compositionally biased toward basic and acidic residues: residues 27-37 (EEAKEHSKKVL) and 77-93 (VSDE…DGLE).

This sequence belongs to the UPF0654 (con-6) family.

In terms of biological role, may protect dormant spores from desiccation and play a significant role in the formation or survival of microconidia and ascospores. In Neurospora crassa (strain ATCC 24698 / 74-OR23-1A / CBS 708.71 / DSM 1257 / FGSC 987), this protein is Conidiation-specific protein 6 (con-6).